Consider the following 323-residue polypeptide: ATP synthase gamma chain (323 aa).

Residues Asn206–Ile240 form an insert region.

This sequence belongs to the ATPase gamma chain family. F-type ATPases have 2 components, CF(1) - the catalytic core - and CF(0) - the membrane proton channel. CF(1) has five subunits: alpha(3), beta(3), gamma(1), delta(1), epsilon(1). CF(0) has three main subunits: a, b and c.

The protein localises to the cell inner membrane. Its function is as follows. Produces ATP from ADP in the presence of a proton gradient across the membrane. The gamma chain is believed to be important in regulating ATPase activity and the flow of protons through the CF(0) complex. The chain is ATP synthase gamma chain from Rickettsia conorii (strain ATCC VR-613 / Malish 7).